Reading from the N-terminus, the 228-residue chain is Urease accessory protein UreF 1 (228 aa).

It belongs to the UreF family. UreD, UreF and UreG form a complex that acts as a GTP-hydrolysis-dependent molecular chaperone, activating the urease apoprotein by helping to assemble the nickel containing metallocenter of UreC. The UreE protein probably delivers the nickel.

It localises to the cytoplasm. Functionally, required for maturation of urease via the functional incorporation of the urease nickel metallocenter. Disruption of the ure1 gene cluster suggests that it protects brucellae during their passage through the stomach. The major route of infection in human brucellosis is oral. The sequence is that of Urease accessory protein UreF 1 from Brucella abortus (strain 2308).